A 31-amino-acid polypeptide reads, in one-letter code: Antifungal protein 1 (31 aa).

It localises to the secreted. Functionally, antifungal activity against C.albicans ATCC 76615. In Musca domestica (House fly), this protein is Antifungal protein 1.